Reading from the N-terminus, the 1861-residue chain is Polyketide synthase 2 (1861 aa).

The region spanning D109–D525 is the Ketosynthase family 3 (KS3) domain. Catalysis depends on for beta-ketoacyl synthase activity residues C264, H399, and H441. The segment at G626–W931 is malonyl-CoA:ACP transacylase (MAT) domain. S716 serves as the catalytic For acyl/malonyl transferase activity. The product template (PT) domain stretch occupies residues T1008–P1312. The N-terminal hotdog fold stretch occupies residues Q1012–S1146. Residues Q1012–A1318 form the PKS/mFAS DH domain. The Proton acceptor; for dehydratase activity role is filled by H1045. Residues D1174–A1318 form a C-terminal hotdog fold region. The Proton donor; for dehydratase activity role is filled by D1232. The 78-residue stretch at S1356 to Q1433 folds into the Carrier 1 domain. At S1393 the chain carries O-(pantetheine 4'-phosphoryl)serine. Residues C1441–D1470 form a disordered region. The span at E1442–A1462 shows a compositional bias: polar residues. Positions E1472–E1546 constitute a Carrier 2 domain. S1506 carries the post-translational modification O-(pantetheine 4'-phosphoryl)serine. Residues A1582 to D1855 are thioesterase (TE) domain. Residue S1685 is the For thioesterase activity of the active site.

Its function is as follows. Polyketide synthase; part of the Pks2 gene cluster that mediates the formation of infectious structures (appressoria), enabling these fungi to kill insects faster. The product of the Pks2 gene cluster is different from the one of Pks1 and has still not been identified. The protein is Polyketide synthase 2 of Metarhizium acridum (strain CQMa 102).